Consider the following 250-residue polypeptide: Pyrroloquinoline-quinone synthase (250 aa).

The protein belongs to the PqqC family.

It catalyses the reaction 6-(2-amino-2-carboxyethyl)-7,8-dioxo-1,2,3,4,7,8-hexahydroquinoline-2,4-dicarboxylate + 3 O2 = pyrroloquinoline quinone + 2 H2O2 + 2 H2O + H(+). It functions in the pathway cofactor biosynthesis; pyrroloquinoline quinone biosynthesis. Ring cyclization and eight-electron oxidation of 3a-(2-amino-2-carboxyethyl)-4,5-dioxo-4,5,6,7,8,9-hexahydroquinoline-7,9-dicarboxylic-acid to PQQ. In Ectopseudomonas mendocina (strain ymp) (Pseudomonas mendocina), this protein is Pyrroloquinoline-quinone synthase.